A 460-amino-acid chain; its full sequence is uncharacterized protein (460 aa).

The tat-type signal signal peptide spans 1-33 (MKESNSRREFLSQSGKMVTAAALFGTSVPLAHA).

This sequence belongs to the metallo-dependent hydrolases superfamily. Post-translationally, exported by the Tat system. The position of the signal peptide cleavage has not been experimentally proven. Can also be exported by the Sec system.

This is an uncharacterized protein from Escherichia coli (strain K12).